The primary structure comprises 65 residues: Sperm protamine P1 (65 aa).

Residues 1–65 (MARYRHSRSR…RYSRRRRRRY (65 aa)) form a disordered region.

The protein belongs to the protamine P1 family. Testis.

It is found in the nucleus. Its subcellular location is the chromosome. Functionally, protamines substitute for histones in the chromatin of sperm during the haploid phase of spermatogenesis. They compact sperm DNA into a highly condensed, stable and inactive complex. The chain is Sperm protamine P1 (PRM1) from Lagorchestes hirsutus (Rufous hare-wallaby).